The following is a 479-amino-acid chain: ATP-dependent RNA helicase DbpA (479 aa).

The short motif at 2–30 (SHFKNYQISHDILRALEGLGYTEPTKVQQ) is the Q motif element. The 171-residue stretch at 33 to 203 (IPAALERKDL…RQYMQNPEHI (171 aa)) folds into the Helicase ATP-binding domain. 46–53 (SQTGSGKT) provides a ligand contact to ATP. The DEAD box motif lies at 151–154 (DEAD). The 161-residue stretch at 214–374 (NIEHAVIQVR…KIEAPSQEEV (161 aa)) folds into the Helicase C-terminal domain. The interval 404-479 (MKLYFNGGKK…KQLKVNKANK (76 aa)) is involved in 23S rRNA binding.

This sequence belongs to the DEAD box helicase family. DbpA subfamily. In terms of assembly, may interact with RNA helicases CshA and CshB.

The protein localises to the cytoplasm. The catalysed reaction is ATP + H2O = ADP + phosphate + H(+). With respect to regulation, ATPase activity is stimulated by interaction with RNA. In terms of biological role, DEAD-box RNA helicase involved in the assembly of the 50S ribosomal subunit. Has an RNA-dependent ATPase activity, which is specific for 23S rRNA, and a 3' to 5' RNA helicase activity that uses the energy of ATP hydrolysis to destabilize and unwind short rRNA duplexes. This chain is ATP-dependent RNA helicase DbpA, found in Bacillus subtilis (strain 168).